Reading from the N-terminus, the 234-residue chain is Nuclear ubiquitous casein and cyclin-dependent kinase substrate 1 (234 aa).

Residues 1–234 form a disordered region; sequence MSRPVRNRKV…SEDEASSGED (234 aa). Residue tyrosine 13 is modified to Phosphotyrosine. Residues serine 14 and serine 19 each carry the phosphoserine modification. Position 26 is a phosphotyrosine (tyrosine 26). The span at 35–51 shows a compositional bias: basic residues; sequence KKIRSSPREAKNKRRSG. 6 positions are modified to phosphoserine: serine 54, serine 58, serine 61, serine 73, serine 75, and serine 79. Basic and acidic residues predominate over residues 64-77; that stretch reads KDVKTKKDDSHSAE. The segment covering 91-100 has biased composition (low complexity); that stretch reads QQRQAASKAA. The segment covering 111 to 124 has biased composition (acidic residues); that stretch reads VGSEEEPEEDDEAP. Residues serine 113, serine 130, serine 132, and serine 144 each carry the phosphoserine modification. Residues 132–145 show a composition bias toward acidic residues; it reads SDEDFLMEDDDDSD. A compositionally biased stretch (basic residues) spans 149–174; the sequence is SKKKNKKMVKKSKPERKEKKMPKPRL. Threonine 179 bears the Phosphothreonine mark. Serine 181 carries the post-translational modification Phosphoserine. Positions 185 to 199 are enriched in basic residues; that stretch reads GKAKVGRPTASKKSK. Residue threonine 202 is modified to Phosphothreonine. Phosphoserine is present on residues serine 204, serine 214, serine 225, and serine 231. A compositionally biased stretch (acidic residues) spans 223 to 234; it reads EGSEDEASSGED.

Does not interact with RAD51. Post-translationally, phosphorylated in an ATM-dependent manner in response to DNA damage. Phosphorylated by CDK1 and casein kinase.

The protein resides in the nucleus. It is found in the chromosome. Chromatin-associated protein involved in DNA repair by promoting homologous recombination (HR). Binds double-stranded DNA (dsDNA) and secondary DNA structures, such as D-loop structures, but with less affinity than RAD51AP1. The chain is Nuclear ubiquitous casein and cyclin-dependent kinase substrate 1 (Nucks1) from Mus musculus (Mouse).